We begin with the raw amino-acid sequence, 201 residues long: UPF0301 protein ROP_34500 (201 aa).

It belongs to the UPF0301 (AlgH) family.

This Rhodococcus opacus (strain B4) protein is UPF0301 protein ROP_34500.